We begin with the raw amino-acid sequence, 220 residues long: A-type ATP synthase subunit K (220 aa).

The next 6 membrane-spanning stretches (helical) occupy residues 5–25, 63–83, 90–110, 125–145, 155–175, and 195–215; these read LILG…GSGI, FLVA…AMFA, LAGL…GAVA, LPET…VGVF, AALG…GQGI, and LVLA…AILI.

This sequence belongs to the V-ATPase proteolipid subunit family. The A-type ATPase is composed of subunits A(3), B(3), C, D, E(1 or 2), F, H(2), I and K(x). Subunit K dimerizes and may form higher oligomers.

The protein localises to the cell membrane. Functionally, component of the A-type ATP synthase that produces ATP from ADP in the presence of a proton gradient across the membrane. This chain is A-type ATP synthase subunit K, found in Methanocaldococcus jannaschii (strain ATCC 43067 / DSM 2661 / JAL-1 / JCM 10045 / NBRC 100440) (Methanococcus jannaschii).